The primary structure comprises 397 residues: Serpin B10 (397 aa).

Residues 74–77 (KKRK) carry the Nuclear localization signal motif.

This sequence belongs to the serpin family. Ov-serpin subfamily.

It localises to the nucleus. Its subcellular location is the cytoplasm. Its function is as follows. Protease inhibitor that may play a role in the regulation of protease activities during hematopoiesis and apoptosis induced by TNF. May regulate protease activities in the cytoplasm and in the nucleus. This chain is Serpin B10 (SERPINB10), found in Rhinolophus ferrumequinum (Greater horseshoe bat).